The sequence spans 425 residues: L-lysine N6-monooxygenase (425 aa).

8–14 (IGVGTGP) is an FAD binding site.

It belongs to the lysine N(6)-hydroxylase/L-ornithine N(5)-oxygenase family. FAD is required as a cofactor.

The protein resides in the cytoplasm. Its subcellular location is the cell membrane. It catalyses the reaction L-lysine + NADPH + O2 = N(6)-hydroxy-L-lysine + NADP(+) + H2O. The protein operates within siderophore biosynthesis; aerobactin biosynthesis. Functionally, flavoprotein monooxygenase required for N-hydroxylation of lysine. Involved in the biosynthesis of the siderophore aerobactin which is a chelator that mediates the high-affinity iron transport systems induced by the organism under iron-stressed conditions. This chain is L-lysine N6-monooxygenase, found in Escherichia coli.